Here is a 210-residue protein sequence, read N- to C-terminus: Uracil phosphoribosyltransferase (210 aa).

5-phospho-alpha-D-ribose 1-diphosphate-binding positions include Arg78, Arg103, and 130–138 (DPMLATGGT). Uracil-binding positions include Ile193 and 198-200 (GDA). Asp199 contributes to the 5-phospho-alpha-D-ribose 1-diphosphate binding site.

It belongs to the UPRTase family. The cofactor is Mg(2+).

It carries out the reaction UMP + diphosphate = 5-phospho-alpha-D-ribose 1-diphosphate + uracil. It participates in pyrimidine metabolism; UMP biosynthesis via salvage pathway; UMP from uracil: step 1/1. Allosterically activated by GTP. Catalyzes the conversion of uracil and 5-phospho-alpha-D-ribose 1-diphosphate (PRPP) to UMP and diphosphate. In Stenotrophomonas maltophilia (strain K279a), this protein is Uracil phosphoribosyltransferase.